Here is a 748-residue protein sequence, read N- to C-terminus: Spidroin-1 (748 aa).

25 consecutive repeat copies span residues 1–25 (QGAGAAAAAAGGAGQGGYGGLGGQG), 26–38 (AGQGGYGGLGGQG), 39–66 (AGQGAGAAAAAAAGGAGQGGYGGLGSQG), 67–96 (AGRGGQGAGAAAAAAGGAGQGGYGGLGSQG), 97–130 (AGRGGLGGQGAGAAAAAAAGGAGQGGYGGLGNQG), 131–158 (AGRGGQGAAAAAAGGAGQGGYGGLGSQG), 159–191 (AGRGGLGGQGAGAAAAAAGGAGQGGYGGLGGQG), 192–204 (AGQGGYGGLGSQG), 205–235 (AGRGGLGGQGAGAAAAAAAGGAGQGGLGGQG), 236–262 (AGQGAGASAAAAGGAGQGGYGGLGSQG), 263–292 (AGRGGEGAGAAAAAAGGAGQGGYGGLGGQG), 293–305 (AGQGGYGGLGSQG), 306–333 (AGRGGLGGQGAGAAAAGGAGQGGLGGQG), 334–360 (AGQGAGAAAAAAGGAGQGGYGGLGSQG), 361–394 (AGRGGLGGQGAGAVAAAAAGGAGQGGYGGLGSQG), 395–424 (AGRGGQGAGAAAAAAGGAGQRGYGGLGNQG), 425–458 (AGRGGLGGQGAGAAAAAAAGGAGQGGYGGLGNQG), 459–485 (AGRGGQGAAAAAGGAGQGGYGGLGSQG), 486–512 (AGRGGQGAGAAAAAAVGAGQEGIRGQG), 513–525 (AGQGGYGGLGSQG), 526–555 (SGRGGLGGQGAGAAAAAAGGAGQGGLGGQG), 556–582 (AGQGAGAAAAAAGGVRQGGYGGLGSQG), 583–612 (AGRGGQGAGAAAAAAGGAGQGGYGGLGGQG), 613–642 (VGRGGLGGQGAGAAAAGGAGQGGYGGVGSG), and 643–655 (ASAASAAASRLSS). Residues 1–655 (QGAGAAAAAA…ASAAASRLSS (655 aa)) form a 25 X approximate tandem repeats region.

Belongs to the silk fibroin family. As to quaternary structure, major subunit, with spidroin 2, of the dragline silk.

It is found in the secreted. The protein localises to the extracellular space. Spiders' major ampullate silk possesses unique characteristics of strength and elasticity. Fibroin consists of pseudocrystalline regions of antiparallel beta-sheet interspersed with elastic amorphous segments. This chain is Spidroin-1, found in Trichonephila clavipes (Golden silk orbweaver).